The following is a 364-amino-acid chain: Capsular polysaccharide phosphotransferase cps1A (364 aa).

It belongs to the stealth family.

Part of a capsular polysaccharide synthesis locus. The polypeptide is Capsular polysaccharide phosphotransferase cps1A (cps1A) (Actinobacillus pleuropneumoniae (Haemophilus pleuropneumoniae)).